The primary structure comprises 475 residues: Aspartyl/glutamyl-tRNA(Asn/Gln) amidotransferase subunit B (475 aa).

It belongs to the GatB/GatE family. GatB subfamily. Heterotrimer of A, B and C subunits.

The catalysed reaction is L-glutamyl-tRNA(Gln) + L-glutamine + ATP + H2O = L-glutaminyl-tRNA(Gln) + L-glutamate + ADP + phosphate + H(+). It catalyses the reaction L-aspartyl-tRNA(Asn) + L-glutamine + ATP + H2O = L-asparaginyl-tRNA(Asn) + L-glutamate + ADP + phosphate + 2 H(+). Allows the formation of correctly charged Asn-tRNA(Asn) or Gln-tRNA(Gln) through the transamidation of misacylated Asp-tRNA(Asn) or Glu-tRNA(Gln) in organisms which lack either or both of asparaginyl-tRNA or glutaminyl-tRNA synthetases. The reaction takes place in the presence of glutamine and ATP through an activated phospho-Asp-tRNA(Asn) or phospho-Glu-tRNA(Gln). The protein is Aspartyl/glutamyl-tRNA(Asn/Gln) amidotransferase subunit B of Chromobacterium violaceum (strain ATCC 12472 / DSM 30191 / JCM 1249 / CCUG 213 / NBRC 12614 / NCIMB 9131 / NCTC 9757 / MK).